Here is a 277-residue protein sequence, read N- to C-terminus: Omega-amidase NIT2 (277 aa).

Residues 4–248 (FRLAVVQLHV…ESVVYADIDL (245 aa)) form the CN hydrolase domain. Glu43 serves as the catalytic Proton acceptor. The active-site Proton donor is the Lys112. The active-site Nucleophile is the Cys153.

This sequence belongs to the carbon-nitrogen hydrolase superfamily. NIT1/NIT2 family. In terms of assembly, homodimer.

It is found in the cytoplasm. It carries out the reaction 2-oxoglutaramate + H2O = 2-oxoglutarate + NH4(+). The enzyme catalyses 2-oxosuccinamate + H2O = oxaloacetate + NH4(+). Functionally, has omega-amidase activity. The role of omega-amidase is to remove potentially toxic intermediates by converting 2-oxoglutaramate and 2-oxosuccinamate to biologically useful 2-oxoglutarate and oxaloacetate, respectively. This chain is Omega-amidase NIT2 (nit2), found in Danio rerio (Zebrafish).